The following is a 403-amino-acid chain: MISEIMHPTKLLKGTKSKLLENKKILVAVTSSIAAIETPKLMRELIRHGAEVYCIITEETKKIIGKEALKFGCGNEVYEEITGDIEHILLYNECDCLLIYPATANIISKINLGIADNIVNTTALMFFGNKPIFIVPAMHENMFNAIKRHIDKLKEKDKIYIISPKFEEGKAKVANIEDVVKAVIEKIGNNLKKEGNRVLILNGGTVEFIDKVRVISNLSSGKMGVALAEAFCKEGFYVEVITAMGLEPPYYIKNHKVLTAKEMLNKAIELAKDFDIIISSAAISDFTVESFEGKLSSEEELILKLKRNPKVLEELRRIYKDKVIIGFKAEYNLDEKELINRAKERLNKYNLNMIIANDLSKHYFGDDYIEVYIITKYEVEKISGSKKEISERIVEKVKKLVKS.

The interval 1–197 (MISEIMHPTK…GNNLKKEGNR (197 aa)) is phosphopantothenoylcysteine decarboxylase. Residues 198 to 403 (VLILNGGTVE…VEKVKKLVKS (206 aa)) form a phosphopantothenate--cysteine ligase region. The CTP site is built by Asp285, Lys294, and Phe327.

It in the N-terminal section; belongs to the HFCD (homo-oligomeric flavin containing Cys decarboxylase) superfamily. The protein in the C-terminal section; belongs to the PPC synthetase family. In terms of assembly, homododecamer. The CoaC domain is responsible for dodecamer formation. It depends on Mg(2+) as a cofactor. Requires FMN as cofactor.

It carries out the reaction N-[(R)-4-phosphopantothenoyl]-L-cysteine + H(+) = (R)-4'-phosphopantetheine + CO2. The enzyme catalyses (R)-4'-phosphopantothenate + L-cysteine + CTP = N-[(R)-4-phosphopantothenoyl]-L-cysteine + CMP + diphosphate + H(+). It participates in cofactor biosynthesis; coenzyme A biosynthesis. Functionally, catalyzes two sequential steps in the biosynthesis of coenzyme A. In the first step cysteine is conjugated to 4'-phosphopantothenate to form 4-phosphopantothenoylcysteine. In the second step the latter compound is decarboxylated to form 4'-phosphopantotheine. The sequence is that of Coenzyme A biosynthesis bifunctional protein CoaBC from Methanocaldococcus jannaschii (strain ATCC 43067 / DSM 2661 / JAL-1 / JCM 10045 / NBRC 100440) (Methanococcus jannaschii).